Reading from the N-terminus, the 389-residue chain is Alpha carbonic anhydrase 8 (389 aa).

The first 22 residues, 1–22 (MKISSLGWVLVLIFISITIVSS), serve as a signal peptide directing secretion. Residues 21–153 (SSAPAPKPPK…TKGNKGPAKW (133 aa)) form a disordered region. Pro residues predominate over residues 25 to 129 (APKPPKPKPA…PKPKPAPKPA (105 aa)). An Alpha-carbonic anhydrase domain is found at 138 to 374 (TEFSYETKGN…VNKRKVYLYK (237 aa)). Residues Cys163 and Cys324 are joined by a disulfide bond. N-linked (GlcNAc...) asparagine glycosylation is present at Asn196. His204 (proton acceptor) is an active-site residue. Positions 232, 234, and 251 each coordinate Zn(2+). Substrate is bound at residue 320–321 (TA). N-linked (GlcNAc...) asparagine glycosylation is present at Asn385.

The protein belongs to the alpha-class carbonic anhydrase family. It depends on Zn(2+) as a cofactor. Post-translationally, N-glycosylated.

Its subcellular location is the plastid. It is found in the chloroplast stroma. It carries out the reaction hydrogencarbonate + H(+) = CO2 + H2O. In terms of biological role, reversible hydration of carbon dioxide. This chain is Alpha carbonic anhydrase 8 (ACA8), found in Arabidopsis thaliana (Mouse-ear cress).